The following is a 175-amino-acid chain: Large ribosomal subunit protein uL10 (175 aa).

This sequence belongs to the universal ribosomal protein uL10 family. Part of the ribosomal stalk of the 50S ribosomal subunit. The N-terminus interacts with L11 and the large rRNA to form the base of the stalk. The C-terminus forms an elongated spine to which L12 dimers bind in a sequential fashion forming a multimeric L10(L12)X complex.

In terms of biological role, forms part of the ribosomal stalk, playing a central role in the interaction of the ribosome with GTP-bound translation factors. This chain is Large ribosomal subunit protein uL10, found in Halorhodospira halophila (strain DSM 244 / SL1) (Ectothiorhodospira halophila (strain DSM 244 / SL1)).